The chain runs to 419 residues: Chaperone protein dnaJ 2 (419 aa).

The J domain occupies 14 to 75; it reads KFYEILGVPK…EKREIYDQYG (62 aa). The CR-type zinc-finger motif lies at 136–220; the sequence is GTTKKLSLSR…CKGEKVVSEK (85 aa). The Zn(2+) site is built by cysteine 149, cysteine 152, cysteine 165, cysteine 168, cysteine 192, cysteine 195, cysteine 208, and cysteine 211. 4 CXXCXGXG motif repeats span residues 149–156, 165–172, 192–199, and 208–215; these read CSKCNGKG, CGGCQGSG, CNDCKGTG, and CPQCKGEK. A compositionally biased stretch (basic and acidic residues) spans 378–391; it reads TTLHDVNIEDEMKR. The tract at residues 378-419 is disordered; sequence TTLHDVNIEDEMKRKAQAQREAYDDDEEDHPGGAQRVQCAQQ. Residue cysteine 416 is modified to Cysteine methyl ester. Cysteine 416 is lipidated: S-farnesyl cysteine. Positions 417-419 are cleaved as a propeptide — removed in mature form; sequence AQQ.

The protein belongs to the DnaJ family. A/I subfamily. As to quaternary structure, homodimer. Zn(2+) is required as a cofactor. In terms of processing, farnesylated. As to expression, expressed in both etiolated and light-grown tissues.

The protein resides in the membrane. Its function is as follows. Plays a continuous role in plant development probably in the structural organization of compartments. The sequence is that of Chaperone protein dnaJ 2 (ATJ2) from Arabidopsis thaliana (Mouse-ear cress).